A 507-amino-acid chain; its full sequence is RNA-binding protein Nova-1 (507 aa).

A disordered region spans residues 1-44; it reads MMAAAPIQQNGTHTGVPIDLDPPDSRKRPLEAPPEAGSTKRTNT. The Bipartite nuclear localization signal motif lies at 27–43; it reads KRPLEAPPEAGSTKRTN. Residues 49 to 116 enclose the KH 1 domain; it reads QYFLKVLIPS…EALNAVHGFI (68 aa). The segment at 139-171 is disordered; the sequence is QTTVNPDRIKQTLPSSPTTTKSSPSDPMTTSRA. A compositionally biased stretch (low complexity) spans 150-169; the sequence is TLPSSPTTTKSSPSDPMTTS. Residue Ser154 is modified to Phosphoserine. KH domains are found at residues 171-237 and 421-488; these read ANQV…VELI and KDVV…QYLI. Residues 419 to 503 form a required for RNA binding region; the sequence is GSKDVVEIAV…YEQGVRAANP (85 aa).

In terms of assembly, interacts with PTBP2; the interaction is direct. In terms of tissue distribution, expressed in cerebellum, brain stem, hippocampus, and frontal cortex.

It localises to the nucleus. In terms of biological role, functions to regulate alternative splicing in neurons by binding pre-mRNA in a sequence-specific manner to activate exon inclusion or exclusion. It binds specifically to the sequences 5'-YCAY-3' and regulates splicing in only a subset of regulated exons. Binding to an exonic 5'-YCAY-3' cluster changes the protein complexes assembled on pre-mRNA, blocking U1 snRNP binding and exon inclusion, whereas binding to an intronic 5'-YCAY-3' cluster enhances spliceosome assembly and exon inclusion. Binding to 5'-YCAY-3' clusters results in a local and asymmetric action to regulate spliceosome assembly and alternative splicing in neurons. Binding to an exonic 5'-YCAY-3' cluster changed the protein complexes assembled on pre-mRNA, blocking U1 snRNP (small nuclear ribonucleoprotein) binding and exon inclusion, whereas binding to an intronic 5'-YCAY-3' cluster enhanced spliceosome assembly and exon inclusion. With NOVA1, they perform unique biological functions in different brain areas and cell types. Autoregulates its own expression by acting as a splicing repressor. Acts to activate the inclusion of exon E3A in the glycine receptor alpha-2 chain and of exon E9 in gamma-aminobutyric-acid receptor gamma-2 subunit via a distal downstream UCAU-rich intronic splicing enhancer. Acts to regulate a novel glycine receptor alpha-2 chain splice variant (alpha-2N) in developing spinal cord. The polypeptide is RNA-binding protein Nova-1 (Homo sapiens (Human)).